Here is a 205-residue protein sequence, read N- to C-terminus: Molybdenum cofactor guanylyltransferase (205 aa).

GTP-binding positions include 14–16 (LAG), lysine 27, aspartate 77, and aspartate 107. Mg(2+) is bound at residue aspartate 107.

This sequence belongs to the MobA family. In terms of assembly, monomer. The cofactor is Mg(2+).

Its subcellular location is the cytoplasm. It carries out the reaction Mo-molybdopterin + GTP + H(+) = Mo-molybdopterin guanine dinucleotide + diphosphate. Functionally, transfers a GMP moiety from GTP to Mo-molybdopterin (Mo-MPT) cofactor (Moco or molybdenum cofactor) to form Mo-molybdopterin guanine dinucleotide (Mo-MGD) cofactor. The chain is Molybdenum cofactor guanylyltransferase from Burkholderia vietnamiensis (strain G4 / LMG 22486) (Burkholderia cepacia (strain R1808)).